The sequence spans 847 residues: Alanine--tRNA ligase (847 aa).

Zn(2+) is bound by residues histidine 554, histidine 558, cysteine 656, and histidine 660.

This sequence belongs to the class-II aminoacyl-tRNA synthetase family. The cofactor is Zn(2+).

It localises to the cytoplasm. It carries out the reaction tRNA(Ala) + L-alanine + ATP = L-alanyl-tRNA(Ala) + AMP + diphosphate. Its function is as follows. Catalyzes the attachment of alanine to tRNA(Ala) in a two-step reaction: alanine is first activated by ATP to form Ala-AMP and then transferred to the acceptor end of tRNA(Ala). Also edits incorrectly charged Ser-tRNA(Ala) and Gly-tRNA(Ala) via its editing domain. The polypeptide is Alanine--tRNA ligase (Helicobacter pylori (strain Shi470)).